We begin with the raw amino-acid sequence, 229 residues long: Large ribosomal subunit protein uL1 (229 aa).

It belongs to the universal ribosomal protein uL1 family. In terms of assembly, part of the 50S ribosomal subunit.

In terms of biological role, binds directly to 23S rRNA. The L1 stalk is quite mobile in the ribosome, and is involved in E site tRNA release. Functionally, protein L1 is also a translational repressor protein, it controls the translation of the L11 operon by binding to its mRNA. The protein is Large ribosomal subunit protein uL1 of Mycoplasmopsis pulmonis (strain UAB CTIP) (Mycoplasma pulmonis).